Here is a 668-residue protein sequence, read N- to C-terminus: Bestrophin-3 (668 aa).

Residues 1–31 lie on the Cytoplasmic side of the membrane; it reads MTVTYSSKVANATFFGFHRLLLKWRGSIYKL. Position 10 (A10) interacts with Ca(2+). The chain crosses the membrane as a helical span at residues 32–51; it reads LYREFIVFAVLYTAISLVYR. Topologically, residues 52–60 are extracellular; that stretch reads LLLTGVQKR. The chain crosses the membrane as a helical span at residues 61-82; the sequence is YFEKLSIYCDRYAEQIPVTFVL. Topologically, residues 83-237 are cytoplasmic; that stretch reads GFYVTLVVNR…DWVGIPLVYT (155 aa). Residues 238 to 255 traverse the membrane as a helical segment; the sequence is QVVTLAVYTFFFACLIGR. Over 256–274 the chain is Extracellular; sequence QFLDPTKGYAGHDLDLYIP. Residues 275-288 form a helical membrane-spanning segment; sequence IFTLLQFFFYAGWL. Residues 289 to 668 are Cytoplasmic-facing; it reads KVAEQLINPF…LNKETEESPK (380 aa). Residues Q293, N296, D301, and D304 each coordinate Ca(2+). Disordered regions lie at residues 400 to 454, 473 to 493, and 532 to 570; these read SAHE…KKSC, RETS…VRTS, and TGVQ…VSAS. The segment covering 425-436 has biased composition (basic and acidic residues); the sequence is PRDDLSPARDLL. The span at 475-489 shows a compositional bias: low complexity; the sequence is TSQTSTLQSLTPQSS. The segment covering 532–545 has biased composition (polar residues); the sequence is TGVQPSKTEQQQGP.

Belongs to the anion channel-forming bestrophin (TC 1.A.46) family. Calcium-sensitive chloride channel subfamily. In terms of tissue distribution, present in skeletal muscle and weakly in brain, spinal cord, bone marrow and retina.

The protein resides in the cell membrane. It carries out the reaction chloride(in) = chloride(out). In terms of biological role, ligand-gated anion channel that allows the movement of chloride monoatomic anions across cell membranes when activated by calcium (Ca2+). This Homo sapiens (Human) protein is Bestrophin-3.